The chain runs to 63 residues: Beta-defensin 3 (63 aa).

Residues 1–20 (MRIHYLLFSFLLVLLSPLSA) form the signal peptide. A propeptide spanning residues 21–22 (FS) is cleaved from the precursor. 3 disulfides stabilise this stretch: C31–C59, C38–C52, and C42–C60.

Belongs to the beta-defensin family.

It is found in the secreted. Functionally, has bactericidal activity. This is Beta-defensin 3 (Defb3) from Rattus norvegicus (Rat).